The following is a 365-amino-acid chain: Putative glycosyltransferase C06E1.7 (365 aa).

This sequence belongs to the glycosyltransferase 11 family.

The polypeptide is Putative glycosyltransferase C06E1.7 (Caenorhabditis elegans).